The sequence spans 349 residues: Probable arabinogalactan endo-beta-1,4-galactanase A (349 aa).

The first 15 residues, 1–15, serve as a signal peptide directing secretion; it reads MLLSFLPLLPLATAA. N-linked (GlcNAc...) asparagine glycosylation is present at asparagine 126. Glutamate 150 functions as the Proton donor in the catalytic mechanism. The Nucleophile role is filled by glutamate 261.

This sequence belongs to the glycosyl hydrolase 53 family.

The protein resides in the secreted. It catalyses the reaction The enzyme specifically hydrolyzes (1-&gt;4)-beta-D-galactosidic linkages in type I arabinogalactans.. Functionally, endogalactanase involved in the degradation of plant cell wall polysaccharides, and more particularly of hairy regions of pectin. The polypeptide is Probable arabinogalactan endo-beta-1,4-galactanase A (galA) (Aspergillus terreus (strain NIH 2624 / FGSC A1156)).